Here is a 139-residue protein sequence, read N- to C-terminus: Large ribosomal subunit protein mL54 (139 aa).

The transit peptide at 1–50 (MPFIESMAPLSRAITRGISQFSCYSNTLVLRSSRNSSSSLVKRSYVSSRV) directs the protein to the mitochondrion. The span at 35–50 (NSSSSLVKRSYVSSRV) shows a compositional bias: low complexity. The tract at residues 35-74 (NSSSSLVKRSYVSSRVSPKKPQHNSDATSSAQKVANKTHT) is disordered. Residues 58–74 (NSDATSSAQKVANKTHT) are compositionally biased toward polar residues.

The protein belongs to the mitochondrion-specific ribosomal protein mL54 family. As to quaternary structure, component of the mitochondrial large ribosomal subunit (mt-LSU). Mature yeast 74S mitochondrial ribosomes consist of a small (37S) and a large (54S) subunit. The 37S small subunit contains a 15S ribosomal RNA (15S mt-rRNA) and at least 32 different proteins. The 54S large subunit contains a 21S rRNA (21S mt-rRNA) and at least 45 different proteins.

Its subcellular location is the mitochondrion. Component of the mitochondrial ribosome (mitoribosome), a dedicated translation machinery responsible for the synthesis of mitochondrial genome-encoded proteins, including at least some of the essential transmembrane subunits of the mitochondrial respiratory chain. The mitoribosomes are attached to the mitochondrial inner membrane and translation products are cotranslationally integrated into the membrane. mL54 may have a meiosis-specific role as it accumulates during the middle stage of sporulation. The protein is Large ribosomal subunit protein mL54 (mrpl37) of Schizosaccharomyces pombe (strain 972 / ATCC 24843) (Fission yeast).